The sequence spans 381 residues: N-acetyldiaminopimelate deacetylase (381 aa).

Residue aspartate 73 is part of the active site. Glutamate 132 serves as the catalytic Proton acceptor.

Belongs to the peptidase M20A family. N-acetyldiaminopimelate deacetylase subfamily.

The catalysed reaction is N-acetyl-(2S,6S)-2,6-diaminopimelate + H2O = (2S,6S)-2,6-diaminopimelate + acetate. It participates in amino-acid biosynthesis; L-lysine biosynthesis via DAP pathway; LL-2,6-diaminopimelate from (S)-tetrahydrodipicolinate (acetylase route): step 3/3. Functionally, catalyzes the conversion of N-acetyl-diaminopimelate to diaminopimelate and acetate. The sequence is that of N-acetyldiaminopimelate deacetylase from Limosilactobacillus reuteri (strain DSM 20016) (Lactobacillus reuteri).